A 284-amino-acid chain; its full sequence is Diaminopimelate epimerase (284 aa).

Positions 20, 53, and 73 each coordinate substrate. The active-site Proton donor is the Cys-82. Residues 83–84, Asn-167, Asn-200, and 218–219 each bind substrate; these read GN and ER. Cys-227 (proton acceptor) is an active-site residue. Residue 228–229 coordinates substrate; sequence GS.

Belongs to the diaminopimelate epimerase family. As to quaternary structure, homodimer.

The protein resides in the cytoplasm. It catalyses the reaction (2S,6S)-2,6-diaminopimelate = meso-2,6-diaminopimelate. It participates in amino-acid biosynthesis; L-lysine biosynthesis via DAP pathway; DL-2,6-diaminopimelate from LL-2,6-diaminopimelate: step 1/1. Its function is as follows. Catalyzes the stereoinversion of LL-2,6-diaminopimelate (L,L-DAP) to meso-diaminopimelate (meso-DAP), a precursor of L-lysine and an essential component of the bacterial peptidoglycan. In Xanthomonas euvesicatoria pv. vesicatoria (strain 85-10) (Xanthomonas campestris pv. vesicatoria), this protein is Diaminopimelate epimerase.